Reading from the N-terminus, the 255-residue chain is Small ribosomal subunit protein uS2 (255 aa).

Residues 232–255 (ASGRDIGASEEAPIEPALEDEAGA) form a disordered region.

The protein belongs to the universal ribosomal protein uS2 family.

The chain is Small ribosomal subunit protein uS2 from Agrobacterium fabrum (strain C58 / ATCC 33970) (Agrobacterium tumefaciens (strain C58)).